A 381-amino-acid polypeptide reads, in one-letter code: Dihydroorotate dehydrogenase (quinone) (381 aa).

FMN is bound by residues 77 to 81 and Ala-101; that span reads AGCDK. Lys-81 is a binding site for substrate. 126 to 129 serves as a coordination point for substrate; it reads NRLG. Residues Asn-158 and Asn-191 each coordinate FMN. Asn-191 lines the substrate pocket. Ser-194 acts as the Nucleophile in catalysis. Residue Asn-196 participates in substrate binding. Positions 229 and 257 each coordinate FMN. A substrate-binding site is contributed by 258 to 259; that stretch reads NT. FMN is bound by residues Gly-287, Gly-316, and 337–338; that span reads YT.

The protein belongs to the dihydroorotate dehydrogenase family. Type 2 subfamily. Monomer. Requires FMN as cofactor.

It localises to the cell membrane. It carries out the reaction (S)-dihydroorotate + a quinone = orotate + a quinol. It participates in pyrimidine metabolism; UMP biosynthesis via de novo pathway; orotate from (S)-dihydroorotate (quinone route): step 1/1. Catalyzes the conversion of dihydroorotate to orotate with quinone as electron acceptor. This Synechocystis sp. (strain ATCC 27184 / PCC 6803 / Kazusa) protein is Dihydroorotate dehydrogenase (quinone) (pyrD).